We begin with the raw amino-acid sequence, 366 residues long: Ferredoxin--NADP reductase (366 aa).

Residues aspartate 51, glutamine 59, tyrosine 64, valine 104, phenylalanine 139, aspartate 308, and threonine 349 each coordinate FAD.

This sequence belongs to the ferredoxin--NADP reductase type 2 family. In terms of assembly, homodimer. FAD is required as a cofactor.

The enzyme catalyses 2 reduced [2Fe-2S]-[ferredoxin] + NADP(+) + H(+) = 2 oxidized [2Fe-2S]-[ferredoxin] + NADPH. This is Ferredoxin--NADP reductase from Polaromonas naphthalenivorans (strain CJ2).